A 549-amino-acid chain; its full sequence is DDB1- and CUL4-associated factor 11 (549 aa).

Positions 1-24 (MGSRNSSSAGSGSLEPSEGLSRRG) are enriched in low complexity. The disordered stretch occupies residues 1–40 (MGSRNSSSAGSGSLEPSEGLSRRGAGLRRSEEEEEEDEDV). 2 positions are modified to phosphoserine: serine 73 and serine 75. Positions 80-89 (DSAWDGRLGD) are enriched in basic and acidic residues. The interval 80 to 100 (DSAWDGRLGDRYNPPVDATPD) is disordered. WD repeat units follow at residues 170 to 210 (TYSQ…HKFK), 216 to 258 (DVGW…TALD), 263 to 302 (ERRF…RTLQ), 305 to 345 (SHED…EDDP), 353 to 392 (GHQD…SREG), 435 to 480 (GVLH…KKLT), and 481 to 520 (NHKA…YFQD).

In terms of assembly, interacts with DDB1 and CUL4A.

The protein operates within protein modification; protein ubiquitination. In terms of biological role, may function as a substrate receptor for CUL4-DDB1 E3 ubiquitin-protein ligase complex. The protein is DDB1- and CUL4-associated factor 11 (Dcaf11) of Rattus norvegicus (Rat).